The following is a 385-amino-acid chain: 1-deoxy-D-xylulose 5-phosphate reductoisomerase 1 (385 aa).

Residues T11, G12, S13, I14, N39, and N122 each coordinate NADPH. K123 contributes to the 1-deoxy-D-xylulose 5-phosphate binding site. E124 contributes to the NADPH binding site. D148 serves as a coordination point for Mn(2+). 1-deoxy-D-xylulose 5-phosphate contacts are provided by S149, E150, S174, and H197. E150 is a binding site for Mn(2+). G203 contributes to the NADPH binding site. S210, N215, K216, and E219 together coordinate 1-deoxy-D-xylulose 5-phosphate. E219 serves as a coordination point for Mn(2+).

Belongs to the DXR family. Mg(2+) serves as cofactor. Requires Mn(2+) as cofactor.

It catalyses the reaction 2-C-methyl-D-erythritol 4-phosphate + NADP(+) = 1-deoxy-D-xylulose 5-phosphate + NADPH + H(+). It functions in the pathway isoprenoid biosynthesis; isopentenyl diphosphate biosynthesis via DXP pathway; isopentenyl diphosphate from 1-deoxy-D-xylulose 5-phosphate: step 1/6. Its function is as follows. Catalyzes the NADPH-dependent rearrangement and reduction of 1-deoxy-D-xylulose-5-phosphate (DXP) to 2-C-methyl-D-erythritol 4-phosphate (MEP). The sequence is that of 1-deoxy-D-xylulose 5-phosphate reductoisomerase 1 from Bacillus thuringiensis subsp. konkukian (strain 97-27).